We begin with the raw amino-acid sequence, 430 residues long: Dye-decolorizing peroxidase Tfu_3078 (430 aa).

The tat-type signal signal peptide spans 1–39 (MTEPDTERKGSSRRGFLAGLGAAALTGAGIGMAAGEVLR). The tract at residues 42–75 (LPDSDPAASPEAEQRLRMAAQRADATAAPQPGIS) is disordered. Positions 60–69 (AAQRADATAA) are enriched in low complexity. Residue D242 is the Proton acceptor of the active site. H338 provides a ligand contact to heme.

The protein belongs to the DyP-type peroxidase family. As to quaternary structure, monomer. The cofactor is heme b. In terms of processing, exported by the Tat system. The position of the signal peptide cleavage has not been experimentally proven.

The protein localises to the secreted. It catalyses the reaction Reactive Blue 5 + 2 H2O2 = 2,2'-disulfonyl azobenzene + 3-[(4-amino-6-chloro-1,3,5-triazin-2-yl)amino]benzenesulfonate + phthalate + 2 H2O + 2 H(+). Its function is as follows. Peroxidase that is able to convert a large number of compounds, but its physiological substrate is not known. Shows high reactivity towards anthraquinone dyes (e.g. Reactive Blue 19) and a modest activity towards standard peroxidase substrates (such as guaiacol and 2,6-dimethoxyphenol) and azo dyes (e.g. Reactive Blue 5). Is also able to oxidize aromatic sulfides enantioselectively, resulting in the corresponding (R)-sulfoxides, but with a poor efficiency. Does not display catalase activity. The sequence is that of Dye-decolorizing peroxidase Tfu_3078 from Thermobifida fusca (strain YX).